A 511-amino-acid chain; its full sequence is 2,3-bisphosphoglycerate-independent phosphoglycerate mutase (511 aa).

Residues aspartate 14 and serine 64 each coordinate Mn(2+). The active-site Phosphoserine intermediate is serine 64. Substrate contacts are provided by residues histidine 125, 155–156 (RD), arginine 187, arginine 193, 259–262 (RADR), and lysine 333. Mn(2+)-binding residues include aspartate 400, histidine 404, aspartate 441, histidine 442, and histidine 460.

The protein belongs to the BPG-independent phosphoglycerate mutase family. As to quaternary structure, monomer. It depends on Mn(2+) as a cofactor.

The enzyme catalyses (2R)-2-phosphoglycerate = (2R)-3-phosphoglycerate. The protein operates within carbohydrate degradation; glycolysis; pyruvate from D-glyceraldehyde 3-phosphate: step 3/5. Functionally, catalyzes the interconversion of 2-phosphoglycerate and 3-phosphoglycerate. In Pseudomonas entomophila (strain L48), this protein is 2,3-bisphosphoglycerate-independent phosphoglycerate mutase.